The primary structure comprises 238 residues: uncharacterized protein (238 aa).

Helical transmembrane passes span 19–39 (FIYGMLLANPVWAHIFLLLGW), 64–84 (WSVIYFAAAVIFAIPALIYNW), 85–105 (QVLYFMFAMLPFVAVNIYFTK), 112–132 (LWNDLAGILIFALAGMGSYYF), 141–161 (ILWVAIYPTLFFIGTTLYVKS), 176–196 (VIFHLLCALIFVVSQQFILAL), and 218–238 (VGLIEFAITAVFFILLLVATL).

It to B.subtilis YwiC.

Its subcellular location is the cell membrane. This is an uncharacterized protein from Haemophilus influenzae (strain ATCC 51907 / DSM 11121 / KW20 / Rd).